We begin with the raw amino-acid sequence, 140 residues long: Protein BIC1 (140 aa).

Positions 1–10 (MMNIDDTTSP) are enriched in polar residues. The tract at residues 1–71 (MMNIDDTTSP…RVDTGRERLK (71 aa)) is disordered. Basic and acidic residues predominate over residues 42–68 (ADKKDLALLEEKPKQSQEEDRVDTGRE).

As to quaternary structure, interacts with CRY2 in both darkness and light.

The protein localises to the nucleus. Its function is as follows. Regulates the blue-light dependent dimerization of CRY2 and formation of photobodies. Interacts with photoexited CRY2 to inhibit its activity. Inhibits CRY phosphorylation. The sequence is that of Protein BIC1 from Arabidopsis thaliana (Mouse-ear cress).